Consider the following 102-residue polypeptide: MPTKARIRLWSTNIENLNFVVNQIKTLAQKTGVEISGPIPLPTSRMEVPVMRLPHGEGKKKWEHWEMKIHKRIIDIASDERVMRQLMRVRVPDDVYIEIELI.

The protein belongs to the universal ribosomal protein uS10 family. In terms of assembly, part of the 30S ribosomal subunit.

Functionally, involved in the binding of tRNA to the ribosomes. This chain is Small ribosomal subunit protein uS10, found in Sulfurisphaera tokodaii (strain DSM 16993 / JCM 10545 / NBRC 100140 / 7) (Sulfolobus tokodaii).